The primary structure comprises 569 residues: ABC1 family protein MCP2 (569 aa).

The N-terminal 18 residues, 1–18 (MMTKAFFNKLPFEVFRRY), are a transit peptide targeting the mitochondrion. Topologically, residues 19–34 (VRTGKSIPQRSPRTRK) are mitochondrial matrix. The helical transmembrane segment at 35–51 (SLLVGGTIASAVVLYNF) threads the bilayer. The Mitochondrial intermembrane segment spans residues 52-569 (NDTFHDSVKH…KFIPKTWLSS (518 aa)).

This sequence belongs to the protein kinase superfamily. ADCK protein kinase family.

It localises to the mitochondrion. It is found in the mitochondrion inner membrane. Functionally, component of MIOREX complexes, large expressome-like assemblies of ribosomes with factors involved in all the steps of post-transcriptional gene expression. Involved in mitochondrial lipid homeostasis. The chain is ABC1 family protein MCP2 from Saccharomyces cerevisiae (strain ATCC 204508 / S288c) (Baker's yeast).